Reading from the N-terminus, the 324-residue chain is NADH-ubiquinone oxidoreductase chain 1 (324 aa).

A run of 8 helical transmembrane segments spans residues 9 to 29 (LTMA…LTLV), 75 to 95 (ILFI…WIPL), 106 to 126 (LGLL…LWSG), 142 to 162 (VAQT…VIML), 177 to 197 (PLYL…STLA), 228 to 248 (LFFL…AILF), 259 to 279 (ELFP…FLWV), and 300 to 320 (LPLT…YAGI).

This sequence belongs to the complex I subunit 1 family.

The protein resides in the mitochondrion inner membrane. The catalysed reaction is a ubiquinone + NADH + 5 H(+)(in) = a ubiquinol + NAD(+) + 4 H(+)(out). In terms of biological role, core subunit of the mitochondrial membrane respiratory chain NADH dehydrogenase (Complex I) that is believed to belong to the minimal assembly required for catalysis. Complex I functions in the transfer of electrons from NADH to the respiratory chain. The immediate electron acceptor for the enzyme is believed to be ubiquinone. The sequence is that of NADH-ubiquinone oxidoreductase chain 1 (MT-ND1) from Struthio camelus (Common ostrich).